Reading from the N-terminus, the 694-residue chain is Long-chain-fatty-acid--CoA ligase 4 (694 aa).

The interval 1–21 (MTEQYSVAVGEAANEHETAPR) is disordered. 269-280 (YTSGSTGTPKGV) contributes to the ATP binding site. The FACS signature appears at 527 to 576 (DGWFRTGDIAEWTPKGQVKIIDRKKNLVKTLNGEYIALEKLESIYRSNPY).

This sequence belongs to the ATP-dependent AMP-binding enzyme family. In terms of assembly, interacts with FAT1. Requires Mg(2+) as cofactor.

It localises to the lipid droplet. It carries out the reaction a long-chain fatty acid + ATP + CoA = a long-chain fatty acyl-CoA + AMP + diphosphate. The enzyme catalyses (9Z)-hexadecenoate + ATP + CoA = (9Z)-hexadecenoyl-CoA + AMP + diphosphate. It catalyses the reaction (9Z)-octadecenoate + ATP + CoA = (9Z)-octadecenoyl-CoA + AMP + diphosphate. The catalysed reaction is hexadecanoate + ATP + CoA = hexadecanoyl-CoA + AMP + diphosphate. In terms of biological role, activates long-chain fatty acids (LCFA) by esterification of the fatty acids into metabolically active CoA-thioesters for subsequent degradation or incorporation into phospholipids. Also facilitates the transport of LCFAs into the cell, either by active transport or by decreasing the intracellular LCFA concentration. Contributes, with FAA1, to the activation of imported myristate. Also involved in long-chain base (LCB) uptake. In contrast ot LCFA uptake, LCB uptake does not require ATP, suggesting that the enzyme is directly involved in LCB uptake. Involved in the sphingolipid-to-glycerolipid metabolic pathway, converting the sphingolipid metabolite hexadecenoic acid to hexadecenoyl-CoA, which is then further converted to glycerolipids. The chain is Long-chain-fatty-acid--CoA ligase 4 (FAA4) from Saccharomyces cerevisiae (strain ATCC 204508 / S288c) (Baker's yeast).